The following is a 505-amino-acid chain: MINIRPDEISSIIREQIEKYDQDVKVDNIGTVLQVGDGIARVYGLDQVMSGELLEFEDKTIGIALNLENDNVGVVLMGTGRQILEGSTVKATGRIAQIPVGDEFLGRVVSPLGVAIDGKGEIVTSDSRLLEAMAPGIISRKSVCEPLQTGITSIDAMIPIGRGQRELIIGDRQTGKTSIAVDTIINQQTEDVICVYVGVGQKASTIAQVVNVLEEKNAMSYTIVVASSANDPATLQYIAPYAGAALAEYFMYKGKATLIVYDDLTKQAVAYRQMSLLLRRPPGREAYPGDVFYLHSRLLERAAKLSDKLGGGSMTALPIIETQASDVSAYIPTNVISITDGQIFLSNDLFNSGIRPAINVGISVSRVGSAAQTKAMKKVAGKLKLELAQFAELEAFSQFASDLDEATQKQLARGTRLREVLKQPQNSPLSVAQQVALIYTGINGYLDDLPVSNVKSYCASLMTYLTTSKKPYTEIVRTTNQFTEEAESSLKEAILESKEAFSKTN.

Residue 170-177 coordinates ATP; it reads GDRQTGKT.

This sequence belongs to the ATPase alpha/beta chains family. As to quaternary structure, F-type ATPases have 2 components, CF(1) - the catalytic core - and CF(0) - the membrane proton channel. CF(1) has five subunits: alpha(3), beta(3), gamma(1), delta(1), epsilon(1). CF(0) has four main subunits: a, b, b' and c.

It is found in the plastid. The protein resides in the chloroplast thylakoid membrane. It catalyses the reaction ATP + H2O + 4 H(+)(in) = ADP + phosphate + 5 H(+)(out). In terms of biological role, produces ATP from ADP in the presence of a proton gradient across the membrane. The alpha chain is a regulatory subunit. This Phaeodactylum tricornutum (strain CCAP 1055/1) protein is ATP synthase subunit alpha, chloroplastic.